A 366-amino-acid chain; its full sequence is Cyanide hydratase (366 aa).

In terms of domain architecture, CN hydrolase spans 6-285; it reads YKAAAVTSEP…DGLMFVDIDL (280 aa). Glutamate 46 functions as the Proton acceptor in the catalytic mechanism. Residue lysine 128 is part of the active site. Cysteine 163 functions as the Nucleophile in the catalytic mechanism.

It belongs to the carbon-nitrogen hydrolase superfamily. Nitrilase family. As to quaternary structure, oligomer of dimers, forming left-handed helical fibers.

The enzyme catalyses formamide = hydrogen cyanide + H2O. Its function is as follows. Catalyzes the hydration of cyanide to formamide. Degradation of cyanide may be important for plant pathogenic fungi in infection of cyanogenic plants. Can also transform some nitriles like 2-cyanopyridine and fumaronitrile. This Pyrenophora teres f. teres (strain 0-1) (Barley net blotch fungus) protein is Cyanide hydratase.